Here is a 162-residue protein sequence, read N- to C-terminus: Anaerobic nitrite reductase NSHB2 (162 aa).

Residues serine 16–lysine 159 enclose the Globin domain. The Homodimerization signature appears at glutamate 49–serine 53. Serine 59, lysine 73, histidine 77, arginine 100, threonine 104, and histidine 105 together coordinate heme b. The short motif at aspartate 112 to glutamate 124 is the Homodimerization element.

The protein belongs to the plant globin family. As to quaternary structure, homodimer. It depends on heme b as a cofactor. As to expression, mainly expressed in germinating seeds, seedlings, roots, flowers and leaves.

Its subcellular location is the cytoplasm. The protein resides in the nucleus. It carries out the reaction Fe(III)-heme b-[protein] + nitric oxide + H2O = Fe(II)-heme b-[protein] + nitrite + 2 H(+). In terms of biological role, phytoglobin that reduces nitrite to nitric oxide under anoxic conditions (e.g. during flooding or in waterlogged soil). May not function as an oxygen storage or transport protein. Has an unusually high affinity for O(2) through an hexacoordinate heme iron because of a very low dissociation constant. Promotes tolerance to low potassium K(+) conditions. This Oryza sativa subsp. indica (Rice) protein is Anaerobic nitrite reductase NSHB2.